A 226-amino-acid polypeptide reads, in one-letter code: MSTGIEATWLGAADYAATYGAMKQFTLERLPETPDALWICEHAPVFTQGIAGRQDHILNPGAIPVVQTDRGGQVTFHGPGQVVAYPLIDLRRAGYFVKEYVYRIEESVLRTLAHFGVTGHRVAGAPGIYVRLDDPFSHAALTGPLPAGDPFRGLGKIAALGIKVSRHATYHGVALNVAMDLEPFSRINPCGYAGLQTVDLSTIGVQTTWEEAARVLSQKLGTYLAP.

Positions P31–P226 constitute a BPL/LPL catalytic domain. Substrate is bound by residues R70–H77, A159–G161, and G172–A174. Catalysis depends on C190, which acts as the Acyl-thioester intermediate.

The protein belongs to the LipB family.

It is found in the cytoplasm. It carries out the reaction octanoyl-[ACP] + L-lysyl-[protein] = N(6)-octanoyl-L-lysyl-[protein] + holo-[ACP] + H(+). It functions in the pathway protein modification; protein lipoylation via endogenous pathway; protein N(6)-(lipoyl)lysine from octanoyl-[acyl-carrier-protein]: step 1/2. Functionally, catalyzes the transfer of endogenously produced octanoic acid from octanoyl-acyl-carrier-protein onto the lipoyl domains of lipoate-dependent enzymes. Lipoyl-ACP can also act as a substrate although octanoyl-ACP is likely to be the physiological substrate. The polypeptide is Octanoyltransferase (Variovorax paradoxus (strain S110)).